A 679-amino-acid polypeptide reads, in one-letter code: Altered inheritance of mitochondria protein 21 (679 aa).

Residues 1 to 85 (MPSEVTPKVP…LQRPVRRSTT (85 aa)) form a disordered region. Over residues 9 to 19 (VPERPSRRKTS) the composition is skewed to basic and acidic residues. A Phosphothreonine modification is found at Thr-18. Ser-36 carries the post-translational modification Phosphoserine. Residue Thr-58 is modified to Phosphothreonine. Ser-70 bears the Phosphoserine mark. Thr-85 carries the post-translational modification Phosphothreonine. A Phosphoserine modification is found at Ser-104. Residues 110-119 (NIHNVSRKKS) show a composition bias toward basic residues. Disordered stretches follow at residues 110–522 (NIHN…EKIE), 549–580 (IDTT…PNKM), and 593–679 (EKLP…FHSL). Polar residues-rich tracts occupy residues 133 to 149 (QNGQ…TNPS) and 164 to 178 (SAIS…SNNE). Residues 179-213 (VTEHSDSEDLTEKQKVHAALDNEAGDRSHFEEKLI) show a composition bias toward basic and acidic residues. Phosphoserine is present on residues Ser-183, Ser-206, and Ser-231. The span at 243-272 (SDDKAEKFTKHPESSLEELQKHQEQQEEKI) shows a compositional bias: basic and acidic residues. Residue Thr-277 is modified to Phosphothreonine. A Phosphoserine modification is found at Ser-284. The segment covering 296-323 (EVNSQPQGPSDTETVIAATSSNVPSQIA) has biased composition (polar residues). Ser-324 carries the post-translational modification Phosphoserine. Basic and acidic residues-rich tracts occupy residues 339–361 (KKDF…RVSE) and 372–383 (EESKIPKIPSER). Residues 383–396 (RPKRRAPPPVPKKP) are interaction with SH3 domain of ABP1. Polar residues-rich tracts occupy residues 414-427 (DLHN…TTAS) and 437-452 (SSIT…TSKL). Over residues 471–482 (LEKKLSSPDTES) the composition is skewed to basic and acidic residues. Over residues 501–512 (RRGRGPRGRKLP) the composition is skewed to basic residues. Thr-552 carries the post-translational modification Phosphothreonine. Basic and acidic residues predominate over residues 556 to 576 (QAERALDEKSKSIPEEQREQS). The residue at position 576 (Ser-576) is a Phosphoserine. Over residues 603–613 (PLSQLPQTNAV) the composition is skewed to polar residues. Ser-620, Ser-623, Ser-625, Ser-627, Ser-667, Ser-671, Ser-675, and Ser-678 each carry phosphoserine. Residues 667-679 (SALHSEEASFHSL) show a composition bias toward basic and acidic residues.

Belongs to the AIM21 family. In terms of assembly, interacts with ribosomes. Interacts with ABP1.

The protein resides in the cytoplasm. The protein localises to the cytoskeleton. Its subcellular location is the actin patch. Its function is as follows. Involved in mitochondrial migration along actin filaments. This Saccharomyces cerevisiae (strain ATCC 204508 / S288c) (Baker's yeast) protein is Altered inheritance of mitochondria protein 21 (AIM21).